The chain runs to 270 residues: Tubulin-specific chaperone B (270 aa).

The CAP-Gly domain maps to G214 to K256.

It belongs to the TBCB family. Supercomplex made of cofactors A to E. Cofactors A and D function by capturing and stabilizing tubulin in a quasi-native conformation. Cofactor E binds to the cofactor D-tubulin complex; interaction with cofactor C then causes the release of tubulin polypeptides that are committed to the native state.

It localises to the cytoplasm. Its subcellular location is the cytoskeleton. In terms of biological role, binds to alpha-tubulin folding intermediates after their interaction with cytosolic chaperonin in the pathway leading from newly synthesized tubulin to properly folded heterodimer. The polypeptide is Tubulin-specific chaperone B (tbcb) (Dictyostelium discoideum (Social amoeba)).